The following is a 213-amino-acid chain: MADSTSGVAEAKADTLREQHLQLLLEIEPAKRCSCPLAGPDSAVEDVHTQLDGDVCHAEVTVGDGDASKVVHATTSVGDDCLCRAFAEFECVPRIRRADGECIVVETYLSDRAVITDLVERLDELTERVCLRRLTSDGRGDSTESKTATIDLSSLTAKQREAALIAVHHGYYETPRRTELATLAEALGISKSALSQRLNAVEAKLATAVFDSE.

Residues 155–206 (LTAKQREAALIAVHHGYYETPRRTELATLAEALGISKSALSQRLNAVEAKLA) form the HTH bat-type domain.

Its function is as follows. Involved in activating dmsEABCD gene expression related to dimethyl sulfoxide (DMSO) reductase. Required for anaerobic respiration on dimethyl sulfoxide (DMSO). The sequence is that of Dimethyl sulfoxide reductase transcriptional activator from Haloferax volcanii (strain ATCC 29605 / DSM 3757 / JCM 8879 / NBRC 14742 / NCIMB 2012 / VKM B-1768 / DS2) (Halobacterium volcanii).